A 465-amino-acid chain; its full sequence is Cysteine--tRNA ligase (465 aa).

C29 is a binding site for Zn(2+). A 'HIGH' region motif is present at residues 31–41 (ITPYDEVHLGH). Residues C212, H237, and E241 each coordinate Zn(2+). The 'KMSKS' region signature appears at 269 to 273 (KMSKS). K272 contributes to the ATP binding site.

Belongs to the class-I aminoacyl-tRNA synthetase family. As to quaternary structure, monomer. Requires Zn(2+) as cofactor.

The protein resides in the cytoplasm. It catalyses the reaction tRNA(Cys) + L-cysteine + ATP = L-cysteinyl-tRNA(Cys) + AMP + diphosphate. This is Cysteine--tRNA ligase from Endomicrobium trichonymphae.